The primary structure comprises 479 residues: Carbohydrate sulfotransferase 3 (479 aa).

Over 1–20 the chain is Cytoplasmic; sequence MEKGLTLPQDCRDFVHSLKM. The helical; Signal-anchor for type II membrane protein transmembrane segment at 21-38 threads the bilayer; it reads RSKYALFLVFVVIVFVFI. Topologically, residues 39–479 are lumenal; sequence EKENKIISRV…LEERGTFWVT (441 aa). 3 N-linked (GlcNAc...) asparagine glycosylation sites follow: asparagine 63, asparagine 74, and asparagine 96. The tract at residues 108–128 is disordered; it reads EAAGEEEEEQRKEEEPPRPAV. 141–147 is a 3'-phosphoadenylyl sulfate binding site; the sequence is TRTGSSF. Residue asparagine 256 is glycosylated (N-linked (GlcNAc...) asparagine). 3'-phosphoadenylyl sulfate is bound at residue 301-309; that stretch reads RDPRAVLAS. N-linked (GlcNAc...) asparagine glycans are attached at residues asparagine 420 and asparagine 464.

The protein belongs to the sulfotransferase 1 family. Gal/GlcNAc/GalNAc subfamily. Post-translationally, N-glycosylated. Widely expressed in adult tissues. Expressed in heart, placenta, skeletal muscle and pancreas. Also expressed in various immune tissues such as spleen, lymph node, thymus and appendix.

The protein resides in the golgi apparatus membrane. The catalysed reaction is chondroitin beta-D-glucuronate + n 3'-phosphoadenylyl sulfate = chondroitin 6'-sulfate + n adenosine 3',5'-bisphosphate + n H(+). The enzyme catalyses 3'-phosphoadenylyl sulfate + keratan = adenosine 3',5'-bisphosphate + keratan 6'-sulfate.. In terms of biological role, sulfotransferase that utilizes 3'-phospho-5'-adenylyl sulfate (PAPS) as sulfonate donor to catalyze the transfer of sulfate to position 6 of the N-acetylgalactosamine (GalNAc) residue of chondroitin. Chondroitin sulfate constitutes the predominant proteoglycan present in cartilage and is distributed on the surfaces of many cells and extracellular matrices. Catalyzes with a lower efficiency the sulfation of Gal residues of keratan sulfate, another glycosaminoglycan. Can also catalyze the sulfation of the Gal residues in sialyl N-acetyllactosamine (sialyl LacNAc) oligosaccharides. May play a role in the maintenance of naive T-lymphocytes in the spleen. This chain is Carbohydrate sulfotransferase 3 (CHST3), found in Homo sapiens (Human).